The primary structure comprises 65 residues: Large ribosomal subunit protein bL35 (65 aa).

The protein belongs to the bacterial ribosomal protein bL35 family.

This Caldicellulosiruptor saccharolyticus (strain ATCC 43494 / DSM 8903 / Tp8T 6331) protein is Large ribosomal subunit protein bL35.